Reading from the N-terminus, the 167-residue chain is Phosphopantetheine adenylyltransferase (167 aa).

Substrate is bound at residue Thr-9. ATP is bound by residues 9-10 (TF) and His-17. Substrate contacts are provided by Lys-41, Leu-73, and Arg-87. ATP is bound by residues 88 to 90 (GLR), Glu-98, and 123 to 129 (YQFISGT).

The protein belongs to the bacterial CoaD family. In terms of assembly, homohexamer. The cofactor is Mg(2+).

The protein resides in the cytoplasm. It carries out the reaction (R)-4'-phosphopantetheine + ATP + H(+) = 3'-dephospho-CoA + diphosphate. It functions in the pathway cofactor biosynthesis; coenzyme A biosynthesis; CoA from (R)-pantothenate: step 4/5. Functionally, reversibly transfers an adenylyl group from ATP to 4'-phosphopantetheine, yielding dephospho-CoA (dPCoA) and pyrophosphate. This Ralstonia pickettii (strain 12J) protein is Phosphopantetheine adenylyltransferase.